The sequence spans 650 residues: Aminopeptidase B (650 aa).

298 to 302 (GGMEN) provides a ligand contact to substrate. Histidine 325 contributes to the Zn(2+) binding site. Catalysis depends on glutamate 326, which acts as the Proton acceptor. Positions 329 and 348 each coordinate Zn(2+). Lysine 446 bears the N6-acetyllysine mark.

Belongs to the peptidase M1 family. In terms of assembly, monomer. It depends on Zn(2+) as a cofactor.

The protein localises to the secreted. The catalysed reaction is Release of N-terminal Arg and Lys from oligopeptides when P1' is not Pro. Also acts on arylamides of Arg and Lys.. In terms of biological role, exopeptidase which selectively removes arginine and/or lysine residues from the N-terminus of several peptide substrates including Arg(0)-Leu-enkephalin, Arg(0)-Met-enkephalin and Arg(-1)-Lys(0)-somatostatin-14. Can hydrolyze leukotriene A4 (LTA-4) into leukotriene B4 (LTB-4). This is Aminopeptidase B (Rnpep) from Mus musculus (Mouse).